A 397-amino-acid chain; its full sequence is uncharacterized protein (397 aa).

The next 4 membrane-spanning stretches (helical) occupy residues 62-79 (VLLFGILIFSIFVALIAI), 92-109 (WYGLLAFGVLTSLELVVT), 135-154 (VVFLPLICVYSLSILYSTLS), and 167-189 (AFLKTMLFTLLICSFILNFFPGI).

It localises to the cell membrane. This is an uncharacterized protein from Archaeoglobus fulgidus (strain ATCC 49558 / DSM 4304 / JCM 9628 / NBRC 100126 / VC-16).